A 366-amino-acid polypeptide reads, in one-letter code: Protein FAM110B (366 aa).

3 disordered regions span residues 127 to 150, 163 to 182, and 214 to 253; these read SSEGSSSGSGHKHSSRNWPPHRDT, KVYPTPGRGSPQESSSHVSR, and IPCSSSAPPLPPKPKVAAMKSPDADQVEPACGVSRRPSLQ. Phosphoserine occurs at positions 234 and 297. The disordered stretch occupies residues 313-333; that stretch reads DCEQSQDSNSDLRNDDSANDR. The segment covering 322-331 has biased composition (basic and acidic residues); the sequence is SDLRNDDSAN.

The protein belongs to the FAM110 family.

Its subcellular location is the cytoplasm. It is found in the cytoskeleton. The protein resides in the microtubule organizing center. It localises to the centrosome. The chain is Protein FAM110B (Fam110b) from Rattus norvegicus (Rat).